A 490-amino-acid chain; its full sequence is UDP-N-acetylmuramate--L-alanine ligase (490 aa).

122–128 (GTHGKTS) contributes to the ATP binding site.

Belongs to the MurCDEF family.

It is found in the cytoplasm. The catalysed reaction is UDP-N-acetyl-alpha-D-muramate + L-alanine + ATP = UDP-N-acetyl-alpha-D-muramoyl-L-alanine + ADP + phosphate + H(+). It functions in the pathway cell wall biogenesis; peptidoglycan biosynthesis. Its function is as follows. Cell wall formation. The protein is UDP-N-acetylmuramate--L-alanine ligase of Mycobacteroides abscessus (strain ATCC 19977 / DSM 44196 / CCUG 20993 / CIP 104536 / JCM 13569 / NCTC 13031 / TMC 1543 / L948) (Mycobacterium abscessus).